Consider the following 306-residue polypeptide: Non-specific ribonucleoside hydrolase RihC (306 aa).

Residue His-235 is part of the active site.

Belongs to the IUNH family. RihC subfamily.

Functionally, hydrolyzes both purine and pyrimidine ribonucleosides with a broad-substrate specificity. This is Non-specific ribonucleoside hydrolase RihC from Salmonella enteritidis PT4 (strain P125109).